We begin with the raw amino-acid sequence, 260 residues long: Tryptophan synthase alpha chain (260 aa).

Active-site proton acceptor residues include Glu-52 and Asp-63.

This sequence belongs to the TrpA family. Tetramer of two alpha and two beta chains.

It carries out the reaction (1S,2R)-1-C-(indol-3-yl)glycerol 3-phosphate + L-serine = D-glyceraldehyde 3-phosphate + L-tryptophan + H2O. The protein operates within amino-acid biosynthesis; L-tryptophan biosynthesis; L-tryptophan from chorismate: step 5/5. The alpha subunit is responsible for the aldol cleavage of indoleglycerol phosphate to indole and glyceraldehyde 3-phosphate. The protein is Tryptophan synthase alpha chain of Streptococcus thermophilus (strain ATCC BAA-250 / LMG 18311).